Reading from the N-terminus, the 219-residue chain is Arginine transport system permease protein ArtQ (219 aa).

A run of 5 helical transmembrane segments spans residues 19–39 (LAIT…LGIV), 51–73 (FIWI…QLMI), 88–108 (QFWA…SEII), 149–169 (AIVN…VIGL), and 187–207 (LEPL…LTFI). Positions 19-208 (LAITLKIVVV…VLVLILTFIG (190 aa)) constitute an ABC transmembrane type-1 domain.

This sequence belongs to the binding-protein-dependent transport system permease family. HisMQ subfamily.

It is found in the cell membrane. Its function is as follows. Part of a binding-protein-dependent transport system for arginine. Probably responsible for the translocation of the substrate across the membrane. The sequence is that of Arginine transport system permease protein ArtQ (artQ) from Bacillus subtilis (strain 168).